A 450-amino-acid chain; its full sequence is C4-dicarboxylate transport protein (450 aa).

A run of 8 helical transmembrane segments spans residues 25-45, 56-76, 90-110, 162-182, 200-220, 234-254, 319-339, and 367-387; these read VVFA…YGAA, LIKM…IASM, MAYF…VANV, ILQV…VGDA, LVNI…AFTI, LVLT…GAVA, IYMT…LTLG, and AATL…ILGV.

This sequence belongs to the dicarboxylate/amino acid:cation symporter (DAACS) (TC 2.A.23) family.

Its subcellular location is the cell inner membrane. Responsible for the transport of dicarboxylates such as succinate, fumarate, and malate from the periplasm across the membrane. This is C4-dicarboxylate transport protein from Acidovorax ebreus (strain TPSY) (Diaphorobacter sp. (strain TPSY)).